Here is a 310-residue protein sequence, read N- to C-terminus: Olfactory receptor 2A1/2A42 (310 aa).

Over 1-24 (MGENQTMVTEFLLLGFLLGPRIQM) the chain is Extracellular. Asn-4 carries an N-linked (GlcNAc...) asparagine glycan. The helical transmembrane segment at 25–48 (LLFGLFSLFYIFTLLGNGAILGLI) threads the bilayer. Topologically, residues 49 to 56 (SLDSRLHT) are cytoplasmic. The helical transmembrane segment at 57–78 (PMYFFLSHLAVVDIAYTRNTVP) threads the bilayer. The Extracellular portion of the chain corresponds to 79-99 (QMLANLLHPAKPISFAGCMTQ). A disulfide bridge connects residues Cys-96 and Cys-188. A helical transmembrane segment spans residues 100–119 (TFLCLSFGHSECLLLVLMSY). Topologically, residues 120–138 (DRYVAICHPLRYSVIMTWR) are cytoplasmic. Residues 139–157 (VCITLAVTSWTCGSLLALA) form a helical membrane-spanning segment. At 158-195 (HVVLILRLPFSGPHEINHFFCEILSVLRLACADTWLNQ) the chain is on the extracellular side. A helical transmembrane segment spans residues 196–218 (VVIFAACVFFLVGPPSLVLVSYS). Over 219–235 (HILAAILRIQSGEGRRK) the chain is Cytoplasmic. A helical transmembrane segment spans residues 236 to 258 (AFSTCSSHLCVVGLFFGSAIIMY). Residues 259 to 271 (MAPKSRHPEEQQK) lie on the Extracellular side of the membrane. The chain crosses the membrane as a helical span at residues 272–291 (VFFLFYSFFNPTLNPLIYSL). Topologically, residues 292–310 (RNGEVKGALRRALGKESHS) are cytoplasmic.

It belongs to the G-protein coupled receptor 1 family.

Its subcellular location is the cell membrane. In terms of biological role, odorant receptor. In Homo sapiens (Human), this protein is Olfactory receptor 2A1/2A42 (OR2A1).